The chain runs to 90 residues: MSERIDISIELNGQQLDFCIPTEITMGRFTELMHQVLKGGVMPQNWTLKLKDKNIKVDDTDLIKELPIGSGDVFCILPTQERQENLNENI.

This is an uncharacterized protein from Clostridium acetobutylicum (strain ATCC 824 / DSM 792 / JCM 1419 / IAM 19013 / LMG 5710 / NBRC 13948 / NRRL B-527 / VKM B-1787 / 2291 / W).